The primary structure comprises 254 residues: Aspartate/glutamate leucyltransferase (254 aa).

This sequence belongs to the R-transferase family. Bpt subfamily.

The protein resides in the cytoplasm. It carries out the reaction N-terminal L-glutamyl-[protein] + L-leucyl-tRNA(Leu) = N-terminal L-leucyl-L-glutamyl-[protein] + tRNA(Leu) + H(+). The catalysed reaction is N-terminal L-aspartyl-[protein] + L-leucyl-tRNA(Leu) = N-terminal L-leucyl-L-aspartyl-[protein] + tRNA(Leu) + H(+). Its function is as follows. Functions in the N-end rule pathway of protein degradation where it conjugates Leu from its aminoacyl-tRNA to the N-termini of proteins containing an N-terminal aspartate or glutamate. The polypeptide is Aspartate/glutamate leucyltransferase (Mesorhizobium japonicum (strain LMG 29417 / CECT 9101 / MAFF 303099) (Mesorhizobium loti (strain MAFF 303099))).